A 426-amino-acid chain; its full sequence is D-tagatose-1,6-bisphosphate aldolase subunit KbaZ (426 aa).

Belongs to the GatZ/KbaZ family. KbaZ subfamily. As to quaternary structure, forms a complex with KbaY.

Its pathway is carbohydrate metabolism; D-tagatose 6-phosphate degradation; D-glyceraldehyde 3-phosphate and glycerone phosphate from D-tagatose 6-phosphate: step 2/2. In terms of biological role, component of the tagatose-1,6-bisphosphate aldolase KbaYZ that is required for full activity and stability of the Y subunit. Could have a chaperone-like function for the proper and stable folding of KbaY. When expressed alone, KbaZ does not show any aldolase activity. The polypeptide is D-tagatose-1,6-bisphosphate aldolase subunit KbaZ (Escherichia coli O139:H28 (strain E24377A / ETEC)).